We begin with the raw amino-acid sequence, 226 residues long: ATP-dependent dethiobiotin synthetase BioD (226 aa).

Position 13 to 18 (13 to 18 (DVGKTL)) interacts with ATP. Threonine 17 serves as a coordination point for Mg(2+). Lysine 38 is a catalytic residue. Residues aspartate 55, 117-120 (EGAG), 177-178 (NR), 206-208 (PFV), and glutamate 213 each bind ATP. Residues aspartate 55 and glutamate 117 each contribute to the Mg(2+) site.

Belongs to the dethiobiotin synthetase family. In terms of assembly, homodimer. The cofactor is Mg(2+).

It localises to the cytoplasm. It catalyses the reaction (7R,8S)-7,8-diammoniononanoate + CO2 + ATP = (4R,5S)-dethiobiotin + ADP + phosphate + 3 H(+). It functions in the pathway cofactor biosynthesis; biotin biosynthesis; biotin from 7,8-diaminononanoate: step 1/2. Its function is as follows. Catalyzes a mechanistically unusual reaction, the ATP-dependent insertion of CO2 between the N7 and N8 nitrogen atoms of 7,8-diaminopelargonic acid (DAPA, also called 7,8-diammoniononanoate) to form a ureido ring. The chain is ATP-dependent dethiobiotin synthetase BioD from Aeromonas salmonicida (strain A449).